A 348-amino-acid polypeptide reads, in one-letter code: Sulfate/thiosulfate import ATP-binding protein CysA (348 aa).

Positions Ile-3–Leu-233 constitute an ABC transporter domain. Gly-35–Ser-42 contributes to the ATP binding site.

Belongs to the ABC transporter superfamily. Sulfate/tungstate importer (TC 3.A.1.6) family.

The protein localises to the plastid. It is found in the chloroplast. The catalysed reaction is sulfate(out) + ATP + H2O = sulfate(in) + ADP + phosphate + H(+). It catalyses the reaction thiosulfate(out) + ATP + H2O = thiosulfate(in) + ADP + phosphate + H(+). In terms of biological role, part of the ABC transporter complex involved in sulfate/thiosulfate import. Responsible for energy coupling to the transport system. This Mesostigma viride (Green alga) protein is Sulfate/thiosulfate import ATP-binding protein CysA.